Reading from the N-terminus, the 378-residue chain is O-methyltransferase gsfD (378 aa).

Residues glycine 219 to glycine 220, aspartate 244, aspartate 266 to methionine 267, and arginine 282 contribute to the S-adenosyl-L-methionine site. The active-site Proton acceptor is the histidine 286.

This sequence belongs to the class I-like SAM-binding methyltransferase superfamily. Cation-independent O-methyltransferase family.

It carries out the reaction desmethyl-dehydrogriseofulvin + S-adenosyl-L-methionine = dehydrogriseofulvin + S-adenosyl-L-homocysteine + H(+). It functions in the pathway secondary metabolite biosynthesis; terpenoid biosynthesis. O-methyltransferase; part of the gene cluster that mediates the biosynthesis of griseofulvin, an important antifungal drug that has been in use for a long time for treating dermatophyte infections. The first step of the pathway is the formation of the heptaketide backbone by gsfA which is initiated by priming with acetyl-CoA, followed by sequential condensations of 6 malonyl-CoA units. The resulting benzophenone can undergo a spontaneous dehydration to form norlichexanthone. However, the true precursor for the griseofulvin biosynthesis is not norlichexanthone, but the heptaketide benzophenone that is O-methylated at 3-OH by gsfB to produce griseophenone D which is further methylated at 9-OH by gsfC to yield griseophenone C. Griseophenone C is then substrate of halogenase gsfI which is responsible for the regio-specific chlorination at the C13 position to form griseophenone B. The cytochrome P450 gsfF catalyzes the coupling of orcinol and phloroglucinol rings in griseophenone B to form desmethyl-dehydrogriseofulvin A which is further methylated at 5-OH by gsfD to yield dehydrogriseofulvin. Finally, gsfE performs stereospecific reduction of enone 18 of dehydrogriseofulvin to afford the final product griseofulvin. The chain is O-methyltransferase gsfD from Penicillium aethiopicum.